A 155-amino-acid polypeptide reads, in one-letter code: MRFISIFLIIVALCVSSSWAFNFTDQPNSFRISGTGCGSGTTTVYFSTDGRCNSACGGSIRIKGEGNNVPNQQFTLNDYSKNVTNCSGTSNVASFRCPALVNTTSPTFTVNVGNSAYHVTCQYAQVTETPAGNSADKVAVGIAIIFGALISLLAL.

The N-terminal stretch at 1-20 (MRFISIFLIIVALCVSSSWA) is a signal peptide. N22, N82, N85, and N102 each carry an N-linked (GlcNAc...) asparagine glycan. An O-linked (GlcNAc) serine glycan is attached at S105. A lipid anchor (GPI-like-anchor amidated asparagine) is attached at N133. Residues 134–155 (SADKVAVGIAIIFGALISLLAL) constitute a propeptide, removed in mature form.

The GPI-like-anchor contains a phosphoceramide group, rather than a phosphatidyl group.

Its subcellular location is the cell membrane. This Dictyostelium discoideum (Social amoeba) protein is Prespore-specific protein E (pspE).